The chain runs to 278 residues: DNA repair protein RecO (278 aa).

The segment covering 1–12 (MGTNDALTSTED) has biased composition (polar residues). The interval 1–41 (MGTNDALTSTEDAVTAGANDAPLPAPPEPPRKARRATSRTS) is disordered.

This sequence belongs to the RecO family.

Functionally, involved in DNA repair and RecF pathway recombination. The chain is DNA repair protein RecO from Burkholderia orbicola (strain AU 1054).